Here is a 309-residue protein sequence, read N- to C-terminus: Pantothenate kinase (309 aa).

An ATP-binding site is contributed by 92-99 (GSVAVGKS).

The protein belongs to the prokaryotic pantothenate kinase family.

Its subcellular location is the cytoplasm. The catalysed reaction is (R)-pantothenate + ATP = (R)-4'-phosphopantothenate + ADP + H(+). It participates in cofactor biosynthesis; coenzyme A biosynthesis; CoA from (R)-pantothenate: step 1/5. The polypeptide is Pantothenate kinase (Latilactobacillus sakei subsp. sakei (strain 23K) (Lactobacillus sakei subsp. sakei)).